The primary structure comprises 565 residues: Acyl-CoA ligase easD (565 aa).

ATP contacts are provided by residues 213–221, 354–359, Asp438, Arg457, and Lys555; these read TSGTSGKQK and HAYGLT. An SBD1 region spans residues 284 to 354; the sequence is DMQLMLKTIE…KLRPTWKINH (71 aa). Residues 355–417 are SBD2; that stretch reads AYGLTETGVV…FNSPSCFLGY (63 aa).

This sequence belongs to the ATP-dependent AMP-binding enzyme family.

The protein operates within antibiotic biosynthesis. Functionally, acyl-CoA ligase; part of the gene cluster that mediates the biosynthesis of emericellamides, secondary metabolites acting as antibiotics. The biosynthesis of emericellamides initiates from the highly reducing polyketide synthase easB which catalyzes the formation of the linear polyketide chain. EasB produces several polyketides that can be further processed by the downstream enzymes. The polyketides are released from easB as linear polyketide carboxylic acids, which are converted to CoA thioesters by the acyl-CoA ligase easD. The substrates are then loaded onto the acyltransferase easC, which shuttles them to the first thiolation (T) domain of the nonribosomal peptide synthetase easA. EasA then performs condensation of the polyketides with one glycine, two alanine, one valine and one leucine residues. A last step of cyclization leads to the production of emericellamides. The polypeptide is Acyl-CoA ligase easD (Emericella nidulans (strain FGSC A4 / ATCC 38163 / CBS 112.46 / NRRL 194 / M139) (Aspergillus nidulans)).